A 465-amino-acid polypeptide reads, in one-letter code: Cysteine--tRNA ligase (465 aa).

Cys-29 contributes to the Zn(2+) binding site. Positions 31-41 (PTVYNYIHIGN) match the 'HIGH' region motif. Positions 209, 234, and 238 each coordinate Zn(2+). A 'KMSKS' region motif is present at residues 266 to 270 (KMSKS). Lys-269 provides a ligand contact to ATP. At Ser-270 the chain carries Phosphoserine.

Belongs to the class-I aminoacyl-tRNA synthetase family. As to quaternary structure, monomer. Requires Zn(2+) as cofactor.

The protein resides in the cytoplasm. It catalyses the reaction tRNA(Cys) + L-cysteine + ATP = L-cysteinyl-tRNA(Cys) + AMP + diphosphate. In Bacillus cereus (strain 03BB102), this protein is Cysteine--tRNA ligase.